A 353-amino-acid polypeptide reads, in one-letter code: UPF0283 membrane protein YcjF (353 aa).

A compositionally biased stretch (basic and acidic residues) spans M1–P19. A disordered region spans residues M1 to R35. Transmembrane regions (helical) follow at residues M70–T90, V100–V120, and E213–W233.

This sequence belongs to the UPF0283 family.

The protein localises to the cell inner membrane. This chain is UPF0283 membrane protein YcjF, found in Salmonella paratyphi A (strain AKU_12601).